The primary structure comprises 179 residues: MSRIGKKPIELPANVTCERTGNAIKVAGPRGELTTIIPEKVEVVMDQTKVLVKRHSDSREDRSYHGLVRTLIQNMITGVSTGYEKSLEIVGVGFKAEAEGRNLKLTIGYSSPIIYAVPEGIDLKIEKATNIILSGIDKEKVGKVAAEIRRIKKPEPYKGKGIKYANEQVRRKVGKSVGA.

Belongs to the universal ribosomal protein uL6 family. Part of the 50S ribosomal subunit.

In terms of biological role, this protein binds to the 23S rRNA, and is important in its secondary structure. It is located near the subunit interface in the base of the L7/L12 stalk, and near the tRNA binding site of the peptidyltransferase center. The chain is Large ribosomal subunit protein uL6 from Syntrophus aciditrophicus (strain SB).